We begin with the raw amino-acid sequence, 283 residues long: Phosphatidylglycerol--prolipoprotein diacylglyceryl transferase (283 aa).

Helical transmembrane passes span 21–41, 62–82, 106–126, 136–156, 190–210, 218–238, and 252–272; these read IEVH…FYMA, YFLW…ILIY, FIGI…IASY, LLIY…FGRI, PSQL…VMWA, GLLI…AEFY, and LSMG…ILLY. Residue Arg-155 participates in a 1,2-diacyl-sn-glycero-3-phospho-(1'-sn-glycerol) binding.

It belongs to the Lgt family.

It localises to the cell inner membrane. The enzyme catalyses L-cysteinyl-[prolipoprotein] + a 1,2-diacyl-sn-glycero-3-phospho-(1'-sn-glycerol) = an S-1,2-diacyl-sn-glyceryl-L-cysteinyl-[prolipoprotein] + sn-glycerol 1-phosphate + H(+). Its pathway is protein modification; lipoprotein biosynthesis (diacylglyceryl transfer). Catalyzes the transfer of the diacylglyceryl group from phosphatidylglycerol to the sulfhydryl group of the N-terminal cysteine of a prolipoprotein, the first step in the formation of mature lipoproteins. This chain is Phosphatidylglycerol--prolipoprotein diacylglyceryl transferase, found in Helicobacter acinonychis (strain Sheeba).